The sequence spans 379 residues: MKEKKEIFTLLHQDAASPARTGVLELPHGKVLTPAFMPVGTAATVKAMTKDDLDEIGFEIILANTYHLFLRPGIEVIKAAGGLHGFSDWKKNFLTDSGGFQVFSLSQLRKITEEGVKFQSHIDGSRQFLSPEIAVELQTGFNSDIQMQLDICSSFGISKTQTLADLKITMNWLDRAFAAWHNTPHEYDGALFPIVQGGFFEDLRLQSLEAILKHEPRGIAIGGLSIGEPKDLYQEYLSFTAKHIPKNKPLYVMGIGTPDYILEAVKNGVDIFDCVLPSRNARNGNLFTHEGAISIKRKEYEFDFNPIDSQCKCKVCRQYTRAYLRHLFRTKEILYSMLATYHNLAFLYSMVQDIREAIQNDSFNDYYKNFLKKYENRLD.

Residue Asp-96 is the Proton acceptor of the active site. Substrate contacts are provided by residues 96–100 (DSGGF), Asp-150, Gln-196, and Gly-223. Positions 254 to 260 (GIGTPDY) are RNA binding. Asp-273 serves as the catalytic Nucleophile. The Zn(2+) site is built by Cys-311, Cys-313, Cys-316, and His-342.

The protein belongs to the queuine tRNA-ribosyltransferase family. Homodimer. Within each dimer, one monomer is responsible for RNA recognition and catalysis, while the other monomer binds to the replacement base PreQ1. Zn(2+) is required as a cofactor.

The catalysed reaction is 7-aminomethyl-7-carbaguanine + guanosine(34) in tRNA = 7-aminomethyl-7-carbaguanosine(34) in tRNA + guanine. It participates in tRNA modification; tRNA-queuosine biosynthesis. In terms of biological role, catalyzes the base-exchange of a guanine (G) residue with the queuine precursor 7-aminomethyl-7-deazaguanine (PreQ1) at position 34 (anticodon wobble position) in tRNAs with GU(N) anticodons (tRNA-Asp, -Asn, -His and -Tyr). Catalysis occurs through a double-displacement mechanism. The nucleophile active site attacks the C1' of nucleotide 34 to detach the guanine base from the RNA, forming a covalent enzyme-RNA intermediate. The proton acceptor active site deprotonates the incoming PreQ1, allowing a nucleophilic attack on the C1' of the ribose to form the product. After dissociation, two additional enzymatic reactions on the tRNA convert PreQ1 to queuine (Q), resulting in the hypermodified nucleoside queuosine (7-(((4,5-cis-dihydroxy-2-cyclopenten-1-yl)amino)methyl)-7-deazaguanosine). This is Queuine tRNA-ribosyltransferase from Treponema denticola (strain ATCC 35405 / DSM 14222 / CIP 103919 / JCM 8153 / KCTC 15104).